We begin with the raw amino-acid sequence, 239 residues long: Ribosomal RNA small subunit methyltransferase G (239 aa).

S-adenosyl-L-methionine is bound by residues Gly78, Phe83, 129–130 (AE), and Arg148.

Belongs to the methyltransferase superfamily. RNA methyltransferase RsmG family.

The protein localises to the cytoplasm. Specifically methylates the N7 position of a guanine in 16S rRNA. The polypeptide is Ribosomal RNA small subunit methyltransferase G (Clostridium botulinum (strain Loch Maree / Type A3)).